A 448-amino-acid chain; its full sequence is PRHLEPAGSNRSYVTTSTRTYSLGALRPSTSRSLYSSSPGGAYVTRSSAVRLRSSMPGVRLLQDSVDFSLADAINTEFKNTRTNEKVELQELNDRFADYIDKVRFLEQQNKILLAELEQLKGQGKSRLGDLYEEEMRELRRQVDQLTNDKARVEVERDNLAEDIIRLREKLQEEMLQREEAESTLQSFRQDVDNASLARLDLERKVESLQEEIAFLKKLHDEEIQELQAQIQEQHVQIDVDVSKPDLTAALRDVRQQYESVAAKNLQEAEEWYKSKFADLSEAANRNNDALRQAKQESNEYRRQVQSLTCEVDALKGTNESLERQMREMEENFALEAANYQDTIGRLQDEIQNMKEEMARHLREYQDLLNVKMALDIEIATYRKLLEGEESRISLPLPNFSSLNLRETNLESLPLVDTHSKRTLLIKTVETRDGQVINETSQHHDDLE.

The tract at residues 1–77 is head; it reads PRHLEPAGSN…FSLADAINTE (77 aa). Phosphoserine is present on Ser-9. Thr-16 carries an O-linked (GlcNAc) threonine glycan. A Phosphoserine; by PKC; alternate modification is found at Ser-17. Ser-17 is a glycosylation site (O-linked (GlcNAc) serine; alternate). At Ser-22 the chain carries Phosphoserine; by CaMK2, PKA, PKC and ROCK2. 3 positions are modified to phosphoserine: Ser-29, Ser-31, and Ser-33. Position 35 is a phosphotyrosine (Tyr-35). Ser-37 is subject to Phosphoserine. Ser-38 is modified (phosphoserine; by CDK5 and CDK1). Position 43 is a phosphotyrosine (Tyr-43). Ser-48 carries the phosphoserine; by PKA and PKC modification. Ser-54 bears the Phosphoserine; by AURKB and ROCK2 mark. The residue at position 55 (Ser-55) is a Phosphoserine. Ser-65 is modified (phosphoserine; by CaMK2). A Phosphoserine modification is found at Ser-69. The interval 78 to 113 is coil 1A; that stretch reads FKNTRTNEKVELQELNDRFADYIDKVRFLEQQNKIL. The stretch at 78-113 forms a coiled coil; it reads FKNTRTNEKVELQELNDRFADYIDKVRFLEQQNKIL. Residues 85–393 enclose the IF rod domain; the sequence is EKVELQELND…KLLEGEESRI (309 aa). Lys-86 is covalently cross-linked (Glycyl lysine isopeptide (Lys-Gly) (interchain with G-Cter in SUMO2)). Tyr-99 carries the post-translational modification Phosphotyrosine. 3 positions are modified to N6-acetyllysine; alternate: Lys-102, Lys-111, and Lys-121. N6-succinyllysine; alternate occurs at positions 102 and 111. Residues Lys-102, Lys-111, and Lys-121 each participate in a glycyl lysine isopeptide (Lys-Gly) (interchain with G-Cter in SUMO2); alternate cross-link. A linker 1 region spans residues 114–135; sequence LAELEQLKGQGKSRLGDLYEEE. Ser-126 bears the Phosphoserine mark. Positions 136–227 form a coiled coil; it reads MRELRRQVDQ…KLHDEEIQEL (92 aa). Residues 136-227 are coil 1B; the sequence is MRELRRQVDQ…KLHDEEIQEL (92 aa). Lys-150 carries the N6-acetyllysine modification. Lys-170 is subject to N6-acetyllysine; alternate. At Lys-170 the chain carries N6-succinyllysine; alternate. At Ser-196 the chain carries Phosphoserine. Lys-205 carries the N6-acetyllysine; alternate modification. Lys-205 is covalently cross-linked (Glycyl lysine isopeptide (Lys-Gly) (interchain with G-Cter in SUMO2); alternate). Position 208 is a phosphoserine (Ser-208). Lys-217 carries the N6-acetyllysine modification. A linker 12 region spans residues 228-250; that stretch reads QAQIQEQHVQIDVDVSKPDLTAA. A Glycyl lysine isopeptide (Lys-Gly) (interchain with G-Cter in SUMO2) cross-link involves residue Lys-244. Positions 251–389 are coil 2; it reads LRDVRQQYES…ATYRKLLEGE (139 aa). Lys-276 is modified (N6-acetyllysine; alternate). Residue Lys-276 is modified to N6-succinyllysine; alternate. Residue Lys-276 forms a Glycyl lysine isopeptide (Lys-Gly) (interchain with G-Cter in SUMO2); alternate linkage. Phosphoserine is present on Ser-281. The stretch at 285-389 forms a coiled coil; that stretch reads NRNNDALRQA…ATYRKLLEGE (105 aa). A Glycyl lysine isopeptide (Lys-Gly) (interchain with G-Cter in SUMO2) cross-link involves residue Lys-295. Ser-307 carries the post-translational modification Phosphoserine. The short motif at 308–311 is the [IL]-x-C-x-x-[DE] motif element; it reads LTCE. Lys-355 bears the N6-acetyllysine; alternate mark. Lys-355 participates in a covalent cross-link: Glycyl lysine isopeptide (Lys-Gly) (interchain with G-Cter in SUMO2); alternate. The tract at residues 390–448 is tail; the sequence is ESRISLPLPNFSSLNLRETNLESLPLVDTHSKRTLLIKTVETRDGQVINETSQHHDDLE. Phosphoserine is present on residues Ser-391, Ser-394, Ser-401, and Ser-402. Phosphothreonine is present on Thr-408. Ser-412 is modified (phosphoserine). Thr-418 carries the post-translational modification Phosphothreonine. Ser-420 is modified (phosphoserine). Lys-421 participates in a covalent cross-link: Glycyl lysine isopeptide (Lys-Gly) (interchain with G-Cter in SUMO2). Lys-427 carries the N6-acetyllysine; alternate modification. At Lys-427 the chain carries N6-succinyllysine; alternate. A Glycyl lysine isopeptide (Lys-Gly) (interchain with G-Cter in SUMO2); alternate cross-link involves residue Lys-427. Lys-427 participates in a covalent cross-link: Glycyl lysine isopeptide (Lys-Gly) (interchain with G-Cter in SUMO1); alternate. Phosphothreonine is present on residues Thr-428 and Thr-440. A Phosphoserine modification is found at Ser-441.

This sequence belongs to the intermediate filament family. As to quaternary structure, homomer assembled from elementary dimers. Identified in complexes that contain VIM, EZR, AHNAK, BFSP1, BFSP2, ANK2, PLEC, PRX and spectrin. Interacts with BCAS3. Interacts with LGSN. Interacts with SYNM. Interacts (via rod region) with PLEC (via CH 1 domain). Interacts with STK33. Interacts with LARP6. Interacts with RAB8B. Interacts with TOR1A; the interaction associates TOR1A with the cytoskeleton. Interacts with TOR1AIP1. Interacts with TOR1AIP1. Interacts with DIAPH1. Interacts with EPPK1; interaction is dependent of higher-order structure of intermediate filament. Interacts with the non-receptor tyrosine kinase SRMS; the interaction leads to phosphorylation of VIM. Interacts with NOD2. Interacts (via head region) with CORO1C. Interacts with HDGF. Interacts with PRKCE (via phorbol-ester/DAG-type 2 domain). Interacts with BFSP2. Interacts with PPL. Interacts with PKP1 and PKP2. Interacts with SCRIB (via PDZ domains); the interaction protects SCRIB from proteasomal degradation and facilitates SCRIB localization to intermediate filaments, the interaction is reduced by cell contact inhibition. One of the most prominent phosphoproteins in various cells of mesenchymal origin. Phosphorylation is enhanced during cell division, at which time vimentin filaments are significantly reorganized. Phosphorylation by PKN1 inhibits the formation of filaments. Filament disassembly during mitosis is promoted by phosphorylation at Ser-37 as well as by nestin. Phosphorylated at Ser-38 by CDK5 during neutrophil secretion in the cytoplasm. Phosphorylated by STK33. Phosphorylated on tyrosine residues by SRMS. Post-translationally, S-nitrosylation is induced by interferon-gamma and oxidatively-modified low-densitity lipoprotein (LDL(ox)) possibly implicating the iNOS-S100A8/9 transnitrosylase complex.

The protein localises to the cytoplasm. It is found in the cytoskeleton. It localises to the nucleus matrix. Its subcellular location is the cell membrane. Its function is as follows. Vimentins are class-III intermediate filaments found in various non-epithelial cells, especially mesenchymal cells. Vimentin is attached to the nucleus, endoplasmic reticulum, and mitochondria, either laterally or terminally. Plays a role in cell directional movement, orientation, cell sheet organization and Golgi complex polarization at the cell migration front. Protects SCRIB from proteasomal degradation and facilitates its localization to intermediate filaments in a cell contact-mediated manner. Involved with LARP6 in the stabilization of type I collagen mRNAs for CO1A1 and CO1A2. The sequence is that of Vimentin (VIM) from Cricetulus griseus (Chinese hamster).